The sequence spans 375 residues: MQLQFRSWMLAALTLLVVFLIFADISEIEEEIGNSGGRGTIRSAVNSLHSKSNRAEVVINGSSPPAVADRSNESLKHNIQPASSKWRHNQTLSLRIRKQILKFLDAEKDISVLKGTLKPGDIIHYIFDRDSTMNVSQNLYELLPRTSPLKNKHFQTCAIVGNSGVLLNSGCGQEIDTHSFVIRCNLAPVQEYARDVGLKTDLVTMNPSVIQRAFEDLVNATWREKLLQRLHGLNGSILWIPAFMARGGKERVEWVNALILKHHVNVRTAYPSLRLLHAVRGYWLTNKVHIKRPTTGLLMYTLATRFCNQIYLYGFWPFPLDQNQNPVKYHYYDSLKYGYTSQASPHTMPLEFKALKSLHEQGALKLTVGQCDGAT.

The Cytoplasmic segment spans residues 1–6 (MQLQFR). Residues 7–23 (SWMLAALTLLVVFLIFA) form a helical; Signal-anchor for type II membrane protein membrane-spanning segment. The Lumenal segment spans residues 24 to 375 (DISEIEEEIG…LTVGQCDGAT (352 aa)). 4 N-linked (GlcNAc...) asparagine glycosylation sites follow: Asn60, Asn72, Asn89, and Asn134. 2 disulfides stabilise this stretch: Cys157–Cys307 and Cys171–Cys371. Asn162 and Asn185 together coordinate CMP-N-acetyl-beta-neuraminate. Asn219 and Asn234 each carry an N-linked (GlcNAc...) asparagine glycan. Thr294, Thr295, Gly296, Trp316, Tyr329, and His330 together coordinate CMP-N-acetyl-beta-neuraminate. His346 serves as the catalytic Proton donor/acceptor.

This sequence belongs to the glycosyltransferase 29 family. In terms of processing, autopolysialylated. Autopolysialylation is not a prerequisite for the polysialylation acitity, but enhances the polysialylation acitity.

It localises to the golgi apparatus membrane. The protein localises to the secreted. The protein resides in the cell membrane. It carries out the reaction [N-acetyl-alpha-D-neuraminosyl-(2-&gt;8)](n) + CMP-N-acetyl-beta-neuraminate = [N-acetyl-alpha-D-neuraminosyl-(2-&gt;8)](n+1) + CMP + H(+). The protein operates within protein modification; protein glycosylation. Functionally, catalyzes the transfer of a sialic acid from a CMP-linked sialic acid donor onto a terminal alpha-2,3-, alpha-2,6-, or alpha-2,8-linked sialic acid of an N-linked glycan acceptor through alpha-2,8-linkages. Therefore, participates in polysialic acid synthesis on various sialylated N-acetyllactosaminyl oligosaccharides (alpha-2,3-, alpha-2,6-, or alpha-2,8-linked sialic acid), including NCAM1, NCAM1 N-glycans, FETUB N-glycans, and to a lesser extent sialylparagloboside (SPG) and AHSG, which does not require the initial addition of an alpha 2,8-sialic acid. However, does not exhibit sialic acid-polymerase activity. Catalyzes polysialic acid synthesis in the hippocampal on NCAM1 and supports neurite outgrowth. ST8SIA2-mediated polysialylation influences on oligodendrocyte differentiation and may promote the integrity of myelin and axons. In Mus musculus (Mouse), this protein is Alpha-2,8-sialyltransferase 8B.